Here is a 169-residue protein sequence, read N- to C-terminus: Thaumatin-like pathogenesis-related protein 4 (169 aa).

The N-terminal stretch at 1–21 (MATSSTVLFLLLAVFAASASA) is a signal peptide.

This sequence belongs to the thaumatin family.

Associated with resistance against stem rust fungi. In Avena sativa (Oat), this protein is Thaumatin-like pathogenesis-related protein 4 (RASTL-4).